The sequence spans 238 residues: Ribonuclease PH (238 aa).

Phosphate is bound by residues Arg-86 and 124–126 (GTR).

The protein belongs to the RNase PH family. In terms of assembly, homohexameric ring arranged as a trimer of dimers.

The catalysed reaction is tRNA(n+1) + phosphate = tRNA(n) + a ribonucleoside 5'-diphosphate. Its function is as follows. Phosphorolytic 3'-5' exoribonuclease that plays an important role in tRNA 3'-end maturation. Removes nucleotide residues following the 3'-CCA terminus of tRNAs; can also add nucleotides to the ends of RNA molecules by using nucleoside diphosphates as substrates, but this may not be physiologically important. Probably plays a role in initiation of 16S rRNA degradation (leading to ribosome degradation) during starvation. The polypeptide is Ribonuclease PH (Rhizorhabdus wittichii (strain DSM 6014 / CCUG 31198 / JCM 15750 / NBRC 105917 / EY 4224 / RW1) (Sphingomonas wittichii)).